A 122-amino-acid chain; its full sequence is Acidic phospholipase A2 5 (122 aa).

Disulfide bonds link Cys26/Cys115, Cys28/Cys44, Cys43/Cys95, Cys49/Cys122, Cys50/Cys88, Cys57/Cys81, and Cys75/Cys86. The Ca(2+) site is built by Phe27, Gly29, and Gly31. His47 is an active-site residue. Asp48 lines the Ca(2+) pocket. Asp89 is an active-site residue.

Belongs to the phospholipase A2 family. Group II subfamily. D49 sub-subfamily. Monomer (predominant). Non-covalently linked homodimers are also observed. Ca(2+) is required as a cofactor. As to expression, expressed by the venom gland.

It is found in the secreted. The catalysed reaction is a 1,2-diacyl-sn-glycero-3-phosphocholine + H2O = a 1-acyl-sn-glycero-3-phosphocholine + a fatty acid + H(+). With respect to regulation, preincubation with heparin slightly increase the enzymatic activity. In terms of biological role, snake venom phospholipase A2 (PLA2) that inhibits platelet aggregation induced by ADP, arachidonic acid and PAF. Acts in a enzymatic independent manner on a proteinase-activated receptor (PAR1, F2R) to evoke calcium release through the inositol 1,4,5-trisphosphate receptor (ITPR1, IP3R) and induces mouse aorta contraction. PAR1, phospholipase C and IP3R inhibitors suppress PA2-induced aorta contraction. PLA2 catalyzes the calcium-dependent hydrolysis of the 2-acyl groups in 3-sn-phosphoglycerides. The sequence is that of Acidic phospholipase A2 5 from Trimeresurus stejnegeri (Chinese green tree viper).